The following is a 320-amino-acid chain: Cytochrome f (320 aa).

Residues 1-35 (MQTRNTFSSIKEEITRSISVSLMIYIITWAPVSNA) form the signal peptide. 4 residues coordinate heme: Tyr-36, Cys-56, Cys-59, and His-60. The chain crosses the membrane as a helical span at residues 286–306 (VQGLLFFFASVILAQIFLVLK).

It belongs to the cytochrome f family. In terms of assembly, the 4 large subunits of the cytochrome b6-f complex are cytochrome b6, subunit IV (17 kDa polypeptide, petD), cytochrome f and the Rieske protein, while the 4 small subunits are PetG, PetL, PetM and PetN. The complex functions as a dimer. Requires heme as cofactor.

The protein resides in the plastid. The protein localises to the chloroplast thylakoid membrane. Its function is as follows. Component of the cytochrome b6-f complex, which mediates electron transfer between photosystem II (PSII) and photosystem I (PSI), cyclic electron flow around PSI, and state transitions. This Cucumis sativus (Cucumber) protein is Cytochrome f.